Reading from the N-terminus, the 233-residue chain is Orotidine 5'-phosphate decarboxylase (233 aa).

Substrate contacts are provided by residues Asp9, Lys31, Asp58 to Thr67, Thr120, Arg182, Gln191, Gly211, and Arg212. Residue Lys60 is the Proton donor of the active site.

Belongs to the OMP decarboxylase family. Type 1 subfamily. In terms of assembly, homodimer.

It carries out the reaction orotidine 5'-phosphate + H(+) = UMP + CO2. Its pathway is pyrimidine metabolism; UMP biosynthesis via de novo pathway; UMP from orotate: step 2/2. Functionally, catalyzes the decarboxylation of orotidine 5'-monophosphate (OMP) to uridine 5'-monophosphate (UMP). This chain is Orotidine 5'-phosphate decarboxylase, found in Listeria monocytogenes serotype 4b (strain CLIP80459).